The chain runs to 302 residues: Nucleotide-binding protein SE_0548 (302 aa).

ATP is bound at residue 18-25 (GMSGAGKS). 69–72 (DLRG) serves as a coordination point for GTP.

This sequence belongs to the RapZ-like family.

Displays ATPase and GTPase activities. The polypeptide is Nucleotide-binding protein SE_0548 (Staphylococcus epidermidis (strain ATCC 12228 / FDA PCI 1200)).